A 755-amino-acid chain; its full sequence is MTSVFDEHKPSDDSHESKIVINGEEEVLEEENDNPIEEVRLTVPITDDPTLPVLTFRTWTLGLFSCILLAFVNQFFGFRSNQLWVSSVAAQIVTLPLGKLMAKTLPTKKFGFPGTNWSWSFNPGPFNMKEHVLITIFANTGAGGVYATSIITIVKAFYNRQLNVAAAMLLTQTTQLLGYGWAGIFRKFLVDSPYMWWPSNLVQVSLFRALHEKEDLQKGQQTRFRFFIIVFCVSFAYYIIPGYLFPSISAISFVCWIWKSSVTAQIVGSGLKGLGIGSFGLDWSTVAGFLGSPLAVPFFAIANFFGGFFIFLYIVLPIFYWTNAYDAQKFPFYTSHTFDQTGHTYNITRILNEKNFDINLDAYNGYSKLYLSVMFALLYGLSFGSLCATISHVALYDGKFIWGMWKKAKTATKDKYGDVHSRLMKKNYQSVPQWWFIAVLVISFAFALYACEGFDKQLQLPWWGLILACAIALFFTLPIGVIQATTNQQMGLNVITELIIGYLYPGKPLANVAFKTYGYISMSQALYFVGDFKLGHYMKIPPRSMFIVQLVATVVASTVCFGTTWWLITSVENICNVDLLPVGSPWTCPGDEVFYNASIIWGVIGPGRMFTKEGIYPGMNWFFLIGLLAPVPFWYLSKKFPEKKWLKQIHVPLIFSAVSAMPQAKAVHYWSWAIVGVVFNYYIFRRFKTWWARHNYILSAALDAGTAIMGVLIFFAFQNNDISLPDWWGLENSDHCPLAHCPLAKGVVVEGCPVF.

13 helical membrane passes run 58–78 (TWTL…FFGF), 82–102 (QLWV…KLMA), 134–154 (ITIF…ITIV), 165–185 (AAAM…AGIF), 226–246 (FFII…YLFP), 298–318 (FFAI…VLPI), 370–390 (YLSV…CATI), 434–454 (WWFI…CEGF), 462–482 (WWGL…IGVI), 546–566 (FIVQ…TTWW), 614–634 (GIYP…VPFW), 664–684 (AKAV…YYIF), and 697–717 (ILSA…FFAF).

It belongs to the oligopeptide OPT transporter (TC 2.A.67.1) family. As to expression, highly expressed in flowers, and moderately expressed in leaves and stems.

The protein localises to the membrane. In terms of biological role, involved in the translocation of tetra- and pentapeptides across the cellular membrane in an energy-dependent manner. The chain is Oligopeptide transporter 1 (OPT1) from Arabidopsis thaliana (Mouse-ear cress).